The primary structure comprises 109 residues: Small ribosomal subunit protein uS10 (109 aa).

This sequence belongs to the universal ribosomal protein uS10 family. Part of the 30S ribosomal subunit.

Functionally, involved in the binding of tRNA to the ribosomes. This chain is Small ribosomal subunit protein uS10, found in Nanoarchaeum equitans (strain Kin4-M).